A 202-amino-acid polypeptide reads, in one-letter code: MCYVKCARYIGYSLVWAAVFCIVANALLYFPNGETKYATEDHLSRFVWYFAGIVGGGLLMLLPAFVFIGMDEEDCCGCCGYENYGKRCSMLSSVLAALIGIVGSAYCVIVASLGLAEGPKCSDAHGVWNYTFASTEGQYLLNSSMWSKCYEPKHIVEWHVTLFSILLAFAAVEFILCLIQVINGMLGGLCGYCCSRQQQYNC.

The Cytoplasmic segment spans residues 1-9; the sequence is MCYVKCARY. Residues 10 to 30 traverse the membrane as a helical segment; sequence IGYSLVWAAVFCIVANALLYF. At 31 to 49 the chain is on the extracellular side; the sequence is PNGETKYATEDHLSRFVWY. A helical transmembrane segment spans residues 50 to 70; that stretch reads FAGIVGGGLLMLLPAFVFIGM. At 71 to 93 the chain is on the cytoplasmic side; sequence DEEDCCGCCGYENYGKRCSMLSS. A helical membrane pass occupies residues 94–114; that stretch reads VLAALIGIVGSAYCVIVASLG. Over 115-161 the chain is Extracellular; that stretch reads LAEGPKCSDAHGVWNYTFASTEGQYLLNSSMWSKCYEPKHIVEWHVT. N-linked (GlcNAc...) asparagine glycosylation is found at N129 and N142. Residues 162–182 form a helical membrane-spanning segment; the sequence is LFSILLAFAAVEFILCLIQVI. At 183 to 202 the chain is on the cytoplasmic side; sequence NGMLGGLCGYCCSRQQQYNC.

This sequence belongs to the L6 tetraspanin family. In terms of assembly, present in high molecular weight complexes in tumor cells. Interacts with SDCBP2. Highly expressed in skin and lung. Moderately expressed in lymph nodes and kidneys. Also present in thymic stroma and fibroblasts.

It is found in the membrane. This Mus musculus (Mouse) protein is Transmembrane 4 L6 family member 1 (Tm4sf1).